Reading from the N-terminus, the 404-residue chain is Multidrug resistance protein MdtG (404 aa).

The next 11 membrane-spanning stretches (helical) occupy residues Leu19–Val39, Leu56–Ala76, Leu90–Ile110, Ala113–Val133, Gly149–Leu169, Pro171–Ile191, Leu222–Leu242, Ile254–Pro274, Ile288–Thr308, Phe317–Asn337, and Ala376–Leu396.

Belongs to the major facilitator superfamily. DHA1 family. MdtG (TC 2.A.1.2.20) subfamily.

It is found in the cell inner membrane. This chain is Multidrug resistance protein MdtG, found in Salmonella paratyphi C (strain RKS4594).